Here is a 554-residue protein sequence, read N- to C-terminus: uncharacterized protein (554 aa).

Disordered regions lie at residues 1–127 (MTTH…NYND), 139–173 (IEDD…SKAG), 293–395 (NNNN…PLSE), and 416–509 (FGFS…RKIR). Low complexity-rich tracts occupy residues 9 to 30 (SSSN…NNNI), 46 to 55 (DPTSSSSPTN), and 63 to 125 (SNSN…LINY). Over residues 139-153 (IEDDEEYEEIGDEES) the composition is skewed to acidic residues. A compositionally biased stretch (polar residues) spans 164–173 (NDSLNGSKAG). Low complexity-rich tracts occupy residues 293 to 387 (NNNN…CSSN), 416 to 449 (FGFS…SSIS), and 461 to 484 (SPPL…NNNH). The span at 485-508 (HNNHHQNHHHQNHNHQHHSKKRKI) shows a compositional bias: basic residues.

This is an uncharacterized protein from Dictyostelium discoideum (Social amoeba).